A 273-amino-acid chain; its full sequence is Light-independent protochlorophyllide reductase iron-sulfur ATP-binding protein (273 aa).

ATP is bound by residues 12–17 (GIGKST) and Lys41. Ser16 serves as a coordination point for Mg(2+). Cys97 and Cys131 together coordinate [4Fe-4S] cluster. 182–183 (NR) is an ATP binding site.

Belongs to the NifH/BchL/ChlL family. Homodimer. Protochlorophyllide reductase is composed of three subunits; BchL, BchN and BchB. [4Fe-4S] cluster is required as a cofactor.

It catalyses the reaction chlorophyllide a + oxidized 2[4Fe-4S]-[ferredoxin] + 2 ADP + 2 phosphate = protochlorophyllide a + reduced 2[4Fe-4S]-[ferredoxin] + 2 ATP + 2 H2O. Its pathway is porphyrin-containing compound metabolism; bacteriochlorophyll biosynthesis (light-independent). Component of the dark-operative protochlorophyllide reductase (DPOR) that uses Mg-ATP and reduced ferredoxin to reduce ring D of protochlorophyllide (Pchlide) to form chlorophyllide a (Chlide). This reaction is light-independent. The L component serves as a unique electron donor to the NB-component of the complex, and binds Mg-ATP. The chain is Light-independent protochlorophyllide reductase iron-sulfur ATP-binding protein from Roseiflexus castenholzii (strain DSM 13941 / HLO8).